We begin with the raw amino-acid sequence, 583 residues long: cAMP-dependent protein kinase catalytic subunit 3 (583 aa).

Disordered stretches follow at residues 51–75 (ATPT…TIGK) and 98–264 (SGTA…QTAK). 2 stretches are compositionally biased toward polar residues: residues 52–69 (TPTQ…TGTP) and 98–107 (SGTAGSTSKL). A compositionally biased stretch (low complexity) spans 108-162 (TTGNGSGNTMTSAYKIPSNNSTTANDSSNTETTFTFKLGRSNGRSSSNVASSESS). Positions 163-176 (DPLESDYSEEDPEQ) are enriched in acidic residues. Low complexity predominate over residues 181 to 200 (PDPATNSRSSSTATTTTTSS). A compositionally biased stretch (acidic residues) spans 205–219 (NDVDEEDEEDDENEG). Residues 221–234 (GNGRDADDATHDSS) are compositionally biased toward basic and acidic residues. Positions 235–256 (ESIEEDDGNETDDEEDDDESEE) are enriched in acidic residues. A Protein kinase domain is found at 274–528 (YQIIKTVGTG…ADDVKRHRWF (255 aa)). Residues 280–288 (VGTGTFGRV) and Lys-303 contribute to the ATP site. The active-site Proton acceptor is the Asp-397. Residues 529–583 (KHLNWNDVYSKKLKPPILPDVHHDGDTKNFDDYPEKDWKPAKAVDQRDLQYFNDF) enclose the AGC-kinase C-terminal domain.

It belongs to the protein kinase superfamily. AGC Ser/Thr protein kinase family. cAMP subfamily. In terms of tissue distribution, expressed in embryonic mesoderm, and the optic lamina, wing disk and leg disks of third instar larvae. More abundant in adult head than adult body.

The catalysed reaction is L-seryl-[protein] + ATP = O-phospho-L-seryl-[protein] + ADP + H(+). It catalyses the reaction L-threonyl-[protein] + ATP = O-phospho-L-threonyl-[protein] + ADP + H(+). Does not have an essential role in development. This is cAMP-dependent protein kinase catalytic subunit 3 (Pka-C3) from Drosophila melanogaster (Fruit fly).